The chain runs to 546 residues: Hydroxylamine reductase (546 aa).

[4Fe-4S] cluster contacts are provided by Cys-3, Cys-6, Cys-18, and Cys-25. Residues His-245, Glu-269, Cys-313, Cys-401, Cys-429, Cys-454, Glu-488, and Lys-490 each contribute to the hybrid [4Fe-2O-2S] cluster site. Cys-401 is subject to Cysteine persulfide.

This sequence belongs to the HCP family. Requires [4Fe-4S] cluster as cofactor. Hybrid [4Fe-2O-2S] cluster is required as a cofactor.

The protein resides in the cytoplasm. The enzyme catalyses A + NH4(+) + H2O = hydroxylamine + AH2 + H(+). Inhibited by cyanide and by sulfide and iron reagents such as dithioerythritol, 2,2'-dipyridyl and o-phenanthroline. Could be involved in assimilation and/or detoxification of hydroxylamine, which is a toxic compound that may be formed during nitrate/nitrite assimilation. Catalyzes the reduction of hydroxylamine to form NH(3) and H(2)O. It has a low reductase activity with FAD, FMN, benzyl viologen and bromphenol blue as electrons donors, but it is not able to use NAD or NADP. In Rhodobacter capsulatus (Rhodopseudomonas capsulata), this protein is Hydroxylamine reductase.